We begin with the raw amino-acid sequence, 101 residues long: Small ribosomal subunit protein uS14 (101 aa).

Belongs to the universal ribosomal protein uS14 family. Part of the 30S ribosomal subunit. Contacts proteins S3 and S10.

In terms of biological role, binds 16S rRNA, required for the assembly of 30S particles and may also be responsible for determining the conformation of the 16S rRNA at the A site. This chain is Small ribosomal subunit protein uS14, found in Zymomonas mobilis subsp. mobilis (strain ATCC 31821 / ZM4 / CP4).